The sequence spans 75 residues: Translational regulator CsrA (75 aa).

The protein belongs to the CsrA/RsmA family. As to quaternary structure, homodimer; the beta-strands of each monomer intercalate to form a hydrophobic core, while the alpha-helices form wings that extend away from the core.

It localises to the cytoplasm. Functionally, a translational regulator that binds mRNA to regulate translation initiation and/or mRNA stability. Usually binds in the 5'-UTR at or near the Shine-Dalgarno sequence preventing ribosome-binding, thus repressing translation. Its main target seems to be the major flagellin gene, while its function is anatagonized by FliW. The protein is Translational regulator CsrA of Alkaliphilus metalliredigens (strain QYMF).